Here is a 1962-residue protein sequence, read N- to C-terminus: Sodium channel protein type 10 subunit alpha (1962 aa).

Topologically, residues methionine 1–lysine 125 are cytoplasmic. The tract at residues glutamine 32–aspartate 56 is disordered. Over residues alanine 33–arginine 42 the composition is skewed to basic residues. Residues glutamate 43–leucine 55 show a composition bias toward basic and acidic residues. One copy of the I repeat lies at phenylalanine 116–glutamine 414. A helical transmembrane segment spans residues valine 126–glutamine 149. The Extracellular segment spans residues threonine 150 to aspartate 154. Residues arginine 155–alanine 174 form a helical membrane-spanning segment. Topologically, residues arginine 175 to aspartate 187 are cytoplasmic. A helical transmembrane segment spans residues proline 188–threonine 206. Over alanine 207–serine 212 the chain is Extracellular. A helical; Voltage-sensor transmembrane segment spans residues glycine 213–leucine 232. The Cytoplasmic segment spans residues lysine 233–aspartate 248. A helical membrane pass occupies residues valine 249–leucine 272. At lysine 273–serine 350 the chain is on the extracellular side. An intrachain disulfide couples cysteine 276 to cysteine 328. N-linked (GlcNAc...) asparagine glycosylation is found at asparagine 284, asparagine 288, asparagine 321, and asparagine 344. Residues phenylalanine 351–leucine 375 constitute an intramembrane region (pore-forming). At arginine 376 to tyrosine 382 the chain is on the extracellular side. Residues methionine 383–alanine 408 traverse the membrane as a helical segment. Residues tyrosine 409–phenylalanine 668 lie on the Cytoplasmic side of the membrane. Serine 450, serine 453, serine 476, and serine 488 each carry phosphoserine. Polar residues predominate over residues histidine 452–asparagine 463. Disordered stretches follow at residues histidine 452–glutamine 493 and leucine 521–leucine 586. Residues serine 621 and serine 624 each carry the phosphoserine modification. Residues cysteine 656 to glutamine 920 form an II repeat. Residues glycine 669 to methionine 693 traverse the membrane as a helical segment. Over glutamate 694–alanine 704 the chain is Extracellular. A helical transmembrane segment spans residues methionine 705 to phenylalanine 728. At aspartate 729–lysine 736 the chain is on the cytoplasmic side. The chain crosses the membrane as a helical span at residues arginine 737–alanine 756. Topologically, residues arginine 757–serine 762 are extracellular. A helical; Voltage-sensor transmembrane segment spans residues valine 763–leucine 782. Topologically, residues asparagine 783–asparagine 798 are cytoplasmic. The chain crosses the membrane as a helical span at residues leucine 799–glycine 819. The Extracellular portion of the chain corresponds to glutamate 820–aspartate 843. Asparagine 828 carries an N-linked (GlcNAc...) asparagine glycan. The pore-forming intramembrane region spans phenylalanine 844–tryptophan 864. Over alanine 865–serine 873 the chain is Extracellular. Cysteine 866 and cysteine 875 are joined by a disulfide. Residues isoleucine 874 to leucine 899 form a helical membrane-spanning segment. The Cytoplasmic segment spans residues asparagine 900 to arginine 1154. Over residues leucine 1015–serine 1026 the composition is skewed to acidic residues. The tract at residues leucine 1015–leucine 1035 is disordered. An III repeat occupies glutamine 1147 to leucine 1456. A helical membrane pass occupies residues isoleucine 1155–phenylalanine 1178. Topologically, residues glutamate 1179–alanine 1191 are extracellular. The chain crosses the membrane as a helical span at residues leucine 1192–phenylalanine 1217. At lysine 1218–asparagine 1223 the chain is on the cytoplasmic side. The helical transmembrane segment at alanine 1224 to leucine 1245 threads the bilayer. Residues glutamine 1246 to aspartate 1249 lie on the Extracellular side of the membrane. A helical; Voltage-sensor transmembrane segment spans residues valine 1250–phenylalanine 1271. The Cytoplasmic segment spans residues glutamate 1272–asparagine 1290. A helical transmembrane segment spans residues valine 1291–isoleucine 1318. Asparagine 1319, asparagine 1335, and asparagine 1343 each carry an N-linked (GlcNAc...) asparagine glycan. Residues asparagine 1319–valine 1360 lie on the Extracellular side of the membrane. An intramembrane region (pore-forming) is located at residues alanine 1361–alanine 1382. Residues alanine 1383–asparagine 1398 are Extracellular-facing. The helical transmembrane segment at valine 1399–isoleucine 1425 threads the bilayer. The Cytoplasmic segment spans residues aspartate 1426–aspartate 1478. Residue serine 1458 is modified to Phosphoserine; by PKC. One copy of the IV repeat lies at isoleucine 1465–glutamine 1764. A helical transmembrane segment spans residues isoleucine 1479 to valine 1502. The Extracellular segment spans residues glutamate 1503–lysine 1513. Residues isoleucine 1514–leucine 1537 form a helical membrane-spanning segment. At arginine 1538–threonine 1543 the chain is on the cytoplasmic side. The helical transmembrane segment at asparagine 1544 to leucine 1567 threads the bilayer. Topologically, residues threonine 1568–phenylalanine 1579 are extracellular. The chain crosses the membrane as a helical; Voltage-sensor span at residues arginine 1580–arginine 1601. The Cytoplasmic portion of the chain corresponds to threonine 1602–asparagine 1616. The helical transmembrane segment at isoleucine 1617–valine 1639 threads the bilayer. Residues serine 1640–threonine 1653 lie on the Extracellular side of the membrane. The pore-forming intramembrane region spans phenylalanine 1654–proline 1676. Over isoleucine 1677 to valine 1704 the chain is Extracellular. N-linked (GlcNAc...) asparagine glycosylation is present at asparagine 1693. A helical membrane pass occupies residues glycine 1705–leucine 1729. Residues glutamate 1730 to proline 1962 are Cytoplasmic-facing. In terms of domain architecture, IQ spans glutamate 1858 to proline 1887. The interval lysine 1914–proline 1962 is disordered. The span at aspartate 1928–glutamine 1947 shows a compositional bias: polar residues.

It belongs to the sodium channel (TC 1.A.1.10) family. Nav1.8/SCN10A subfamily. In terms of assembly, the channel consists of an ion conducting pore forming alpha-subunit regulated by one or more associated auxiliary subunits SCN1B, SCN2B and SCN3B; electrophysiological properties may vary depending on the type of the associated beta subunits. Found in a number of complexes with PRX, DYNLT1 and PDZD2. Interacts with proteins such as FSTL1, PRX, DYNLT1, PDZD2, S100A10 and many others. Interacts with NEDD4 and NEDD4L. Post-translationally, ubiquitinated by NEDD4L; which promotes its endocytosis. Phosphorylation at Ser-1458 by PKC in a highly conserved cytoplasmic loop slows inactivation of the sodium channel and reduces peak sodium currents. In terms of processing, lacks the cysteine which covalently binds the conotoxin GVIIJ. This cysteine (position 825) is speculated in other sodium channel subunits alpha to be implied in covalent binding with the sodium channel subunit beta-2 or beta-4. In terms of tissue distribution, expressed in nodose ganglia, but not in cortex, hippocampus, cerebellum, liver, heart and skeletal muscle.

Its subcellular location is the cell membrane. The catalysed reaction is Na(+)(in) = Na(+)(out). Its function is as follows. Tetrodotoxin-resistant channel that mediates the voltage-dependent sodium ion permeability of excitable membranes. Assuming opened or closed conformations in response to the voltage difference across the membrane, the protein forms a sodium-selective channel through which sodium ions may pass in accordance with their electrochemical gradient. Plays a role in neuropathic pain mechanisms. This is Sodium channel protein type 10 subunit alpha (SCN10A) from Canis lupus familiaris (Dog).